The following is a 274-amino-acid chain: 2,3,4,5-tetrahydropyridine-2,6-dicarboxylate N-succinyltransferase (274 aa).

Positions 104 and 141 each coordinate substrate.

Belongs to the transferase hexapeptide repeat family. As to quaternary structure, homotrimer.

It is found in the cytoplasm. The enzyme catalyses (S)-2,3,4,5-tetrahydrodipicolinate + succinyl-CoA + H2O = (S)-2-succinylamino-6-oxoheptanedioate + CoA. The protein operates within amino-acid biosynthesis; L-lysine biosynthesis via DAP pathway; LL-2,6-diaminopimelate from (S)-tetrahydrodipicolinate (succinylase route): step 1/3. This chain is 2,3,4,5-tetrahydropyridine-2,6-dicarboxylate N-succinyltransferase, found in Shewanella frigidimarina (strain NCIMB 400).